Consider the following 512-residue polypeptide: Keratin, type I cytoskeletal 24 (512 aa).

The tract at residues 1–21 (MFCSAQKGSCSSRVSSSGAVG) is disordered. The segment at 1-140 (MFCSAQKGSC…GYDGGLLSGS (140 aa)) is head. Residues 8-21 (GSCSSRVSSSGAVG) are compositionally biased toward low complexity. Residues 141-176 (EKQTMQDLNDRLANYLDKVRALEEANTDLECKIKDW) are coil 1A. In terms of domain architecture, IF rod spans 141–455 (EKQTMQDLND…RLLNGDGGGC (315 aa)). The linker 1 stretch occupies residues 177 to 197 (YGKHGSVKGGSGRDYSQYYSI). The interval 198-289 (IEDLKKQILS…KNHEEEMKCM (92 aa)) is coil 1B. The segment at 290–312 (QGSSGGDVTVEMNAAPGVDLTKL) is linker 12. A coil 2 region spans residues 313-451 (LNDMRAQYEA…ETYRRLLNGD (139 aa)). The tract at residues 452 to 512 (GGGCDYRNLV…VSNISEVKIK (61 aa)) is tail.

Belongs to the intermediate filament family. Heterotetramer of two type I and two type II keratins.

The chain is Keratin, type I cytoskeletal 24 (Krt24) from Mus musculus (Mouse).